A 466-amino-acid chain; its full sequence is Asparagine--tRNA ligase (466 aa).

The protein belongs to the class-II aminoacyl-tRNA synthetase family. As to quaternary structure, homodimer.

The protein resides in the cytoplasm. The catalysed reaction is tRNA(Asn) + L-asparagine + ATP = L-asparaginyl-tRNA(Asn) + AMP + diphosphate + H(+). The protein is Asparagine--tRNA ligase of Shewanella putrefaciens (strain CN-32 / ATCC BAA-453).